We begin with the raw amino-acid sequence, 330 residues long: Aspartate--ammonia ligase (330 aa).

It belongs to the class-II aminoacyl-tRNA synthetase family. AsnA subfamily.

Its subcellular location is the cytoplasm. The enzyme catalyses L-aspartate + NH4(+) + ATP = L-asparagine + AMP + diphosphate + H(+). It participates in amino-acid biosynthesis; L-asparagine biosynthesis; L-asparagine from L-aspartate (ammonia route): step 1/1. The sequence is that of Aspartate--ammonia ligase from Haemophilus influenzae (strain ATCC 51907 / DSM 11121 / KW20 / Rd).